Here is a 236-residue protein sequence, read N- to C-terminus: Phosphoribosylformylglycinamidine synthase subunit PurQ (236 aa).

The 232-residue stretch at 3 to 234 (FGVIVFPGSN…VDWWERGERL (232 aa)) folds into the Glutamine amidotransferase type-1 domain. The active-site Nucleophile is the Cys-86. Catalysis depends on residues His-203 and Glu-205.

In terms of assembly, part of the FGAM synthase complex composed of 1 PurL, 1 PurQ and 2 PurS subunits.

Its subcellular location is the cytoplasm. It catalyses the reaction N(2)-formyl-N(1)-(5-phospho-beta-D-ribosyl)glycinamide + L-glutamine + ATP + H2O = 2-formamido-N(1)-(5-O-phospho-beta-D-ribosyl)acetamidine + L-glutamate + ADP + phosphate + H(+). It carries out the reaction L-glutamine + H2O = L-glutamate + NH4(+). It functions in the pathway purine metabolism; IMP biosynthesis via de novo pathway; 5-amino-1-(5-phospho-D-ribosyl)imidazole from N(2)-formyl-N(1)-(5-phospho-D-ribosyl)glycinamide: step 1/2. Functionally, part of the phosphoribosylformylglycinamidine synthase complex involved in the purines biosynthetic pathway. Catalyzes the ATP-dependent conversion of formylglycinamide ribonucleotide (FGAR) and glutamine to yield formylglycinamidine ribonucleotide (FGAM) and glutamate. The FGAM synthase complex is composed of three subunits. PurQ produces an ammonia molecule by converting glutamine to glutamate. PurL transfers the ammonia molecule to FGAR to form FGAM in an ATP-dependent manner. PurS interacts with PurQ and PurL and is thought to assist in the transfer of the ammonia molecule from PurQ to PurL. The protein is Phosphoribosylformylglycinamidine synthase subunit PurQ of Moorella thermoacetica (strain ATCC 39073 / JCM 9320).